The primary structure comprises 107 residues: Cytochrome b-c1 complex subunit 8 (107 aa).

The propeptide at M1–L8 is plays a role in role in intramitochondrial sorting. Over M1–F62 the chain is Mitochondrial matrix. Residues R63 to L93 traverse the membrane as a helical segment. Residues N94 to E107 lie on the Mitochondrial intermembrane side of the membrane.

Belongs to the UQCRQ/QCR8 family. Component of the ubiquinol-cytochrome c oxidoreductase (cytochrome b-c1 complex, complex III, CIII), a multisubunit enzyme composed of 10 subunits. The complex is composed of 3 respiratory subunits cytochrome b (cob), cytochrome c1 (cyt-1) and Rieske protein (fes-1), 2 core protein subunits pep and ucr-1, and 5 low-molecular weight protein subunits qcr6, qcr7, qcr8, qcr9 and probably NCU16844/qcr10. The complex exists as an obligatory dimer and forms supercomplexes (SCs) in the inner mitochondrial membrane with NADH-ubiquinone oxidoreductase (complex I, CI) and cytochrome c oxidase (complex IV, CIV), resulting in different assemblies (supercomplexes SCI(1)III(2), SCIII(2)IV(1) and SCIII(2)IV(2) as well as higher order I(x)III(y)IV(z) megacomplexes).

The protein localises to the mitochondrion inner membrane. Functionally, component of the ubiquinol-cytochrome c oxidoreductase, a multisubunit transmembrane complex that is part of the mitochondrial electron transport chain which drives oxidative phosphorylation. The respiratory chain contains 3 multisubunit complexes succinate dehydrogenase (complex II, CII), ubiquinol-cytochrome c oxidoreductase (cytochrome b-c1 complex, complex III, CIII) and cytochrome c oxidase (complex IV, CIV), that cooperate to transfer electrons derived from NADH and succinate to molecular oxygen, creating an electrochemical gradient over the inner membrane that drives transmembrane transport and the ATP synthase. The cytochrome b-c1 complex catalyzes electron transfer from ubiquinol to cytochrome c, linking this redox reaction to translocation of protons across the mitochondrial inner membrane, with protons being carried across the membrane as hydrogens on the quinol. In the process called Q cycle, 2 protons are consumed from the matrix, 4 protons are released into the intermembrane space and 2 electrons are passed to cytochrome c. The protein is Cytochrome b-c1 complex subunit 8 (qcr8) of Neurospora crassa (strain ATCC 24698 / 74-OR23-1A / CBS 708.71 / DSM 1257 / FGSC 987).